Here is a 477-residue protein sequence, read N- to C-terminus: Glutamate--tRNA ligase (477 aa).

The 'HIGH' region motif lies at 12 to 22 (PSPTGMFHVGG). Positions 106, 108, 128, and 130 each coordinate Zn(2+). Positions 238–242 (KLSKR) match the 'KMSKS' region motif. K241 lines the ATP pocket.

The protein belongs to the class-I aminoacyl-tRNA synthetase family. Glutamate--tRNA ligase type 1 subfamily. Monomer. The cofactor is Zn(2+).

The protein localises to the cytoplasm. The catalysed reaction is tRNA(Glu) + L-glutamate + ATP = L-glutamyl-tRNA(Glu) + AMP + diphosphate. In terms of biological role, catalyzes the attachment of glutamate to tRNA(Glu) in a two-step reaction: glutamate is first activated by ATP to form Glu-AMP and then transferred to the acceptor end of tRNA(Glu). The polypeptide is Glutamate--tRNA ligase (Thermobifida fusca (strain YX)).